We begin with the raw amino-acid sequence, 222 residues long: Leucyl/phenylalanyl-tRNA--protein transferase (222 aa).

Belongs to the L/F-transferase family.

The protein resides in the cytoplasm. The catalysed reaction is N-terminal L-lysyl-[protein] + L-leucyl-tRNA(Leu) = N-terminal L-leucyl-L-lysyl-[protein] + tRNA(Leu) + H(+). It carries out the reaction N-terminal L-arginyl-[protein] + L-leucyl-tRNA(Leu) = N-terminal L-leucyl-L-arginyl-[protein] + tRNA(Leu) + H(+). It catalyses the reaction L-phenylalanyl-tRNA(Phe) + an N-terminal L-alpha-aminoacyl-[protein] = an N-terminal L-phenylalanyl-L-alpha-aminoacyl-[protein] + tRNA(Phe). In terms of biological role, functions in the N-end rule pathway of protein degradation where it conjugates Leu, Phe and, less efficiently, Met from aminoacyl-tRNAs to the N-termini of proteins containing an N-terminal arginine or lysine. The polypeptide is Leucyl/phenylalanyl-tRNA--protein transferase (Legionella pneumophila (strain Corby)).